We begin with the raw amino-acid sequence, 79 residues long: RNA-binding protein KhpA (79 aa).

Residues 30 to 79 (GRVLEVRVHPDDLGKVIGRNGRTARALRTVVGAIGGRGVRVDLVDVDHVR) form the KH domain.

This sequence belongs to the KhpA RNA-binding protein family.

It is found in the cytoplasm. The protein resides in the nucleoid. In terms of biological role, a probable RNA-binding protein. The protein is RNA-binding protein KhpA of Streptomyces coelicolor (strain ATCC BAA-471 / A3(2) / M145).